The primary structure comprises 442 residues: Tyrosine-protein kinase transforming protein RYK (442 aa).

Positions 45–316 (LSLGKVLGEG…QLKVHLEKLL (272 aa)) constitute a Protein kinase domain. ATP contacts are provided by residues 51-59 (LGEGEFGSV) and K77. The active-site Proton acceptor is the D181. Y212 is modified (phosphotyrosine; by autocatalysis).

It belongs to the protein kinase superfamily. Tyr protein kinase family. AXL/UFO subfamily.

Its subcellular location is the host cell membrane. The enzyme catalyses L-tyrosyl-[protein] + ATP = O-phospho-L-tyrosyl-[protein] + ADP + H(+). This Avian retrovirus RPL30 protein is Tyrosine-protein kinase transforming protein RYK (V-RYK).